Reading from the N-terminus, the 1030-residue chain is MNGTTSPIAARSKRKEPPHTVDGRHPKHHRTNGEVAPAADNTPDNQDEFEGEFGVELEEYEDARLPAVLPTGPDTAEWQATIQRVVRNVVSIRFCQTCSFDTDPALTSEATGFVVDAERGYILTNRHVVGSGPFWGYCIFDNHEEVDAYPVYRDPVHDFGILKFDPKAIKYMPVDALPLRPDLAKVGIEIRVVGNDAGEKLSILSGVISRLDRNAPEYGEGYSDFNTCYYQASAAASGGSSGSPVVNMDGYAVALQAGGRADGAATDYFLPLDRPLRALKCLQEGNPITRGDIQCQFVLKPFDECRRLGLTPEWEAQIRKAFPKETNMLVAEIVLPEGPSHKKAEEGDVLIKVNGELLTQFIRLDDILDSSVGKPVKLLLLRGGEEIEVEIEVGDLHSITPDRFVSVAGGSFHSLSYQQARLYGVACKGVFVCEAGGSFRFDNAENGWLIQTVDHKKTPDLETFIEVMKGIHDKARVVVTYKHLRDLHTLNTTILHIDRHWSKKMKLAVRNDETGLWDFTNLADPLPPVAPIPRKADFIQLEHTSHPAVADLVRSFVHVSCVMPVKLDGFPKNRKWGMGLVIDADKGLVVISRAIVPYDLCDITVTIADSIVVEGKVVFLHPLQNYAIIQYDPKLVDAPVLSARLSSQEITQGASTYFIGYNRIGRIVHAATTVTEIFAVTIPANSGAPRYRAVNVDAITVDTSLSGQCGSGVLVAQDGTVQALWLTYLGERNPSTHRDEEYHLGLATPTLLPVVEQIQRGVDPKLRMLSVEFRAIQMSQARLMGVSEEWIQKVSVANTAHHQLFMVTKRTFERNEQEEAAALLEGDVVLSLNGKIITKISDLDIMYSNEQLDAVLVRNCEELSLKLDTVAADDVETTRAVSFCGAIFHAPHHAVRQQISKLFSEVYVSARTRGSPSYQYGLAPTNFITHVNGKPTPDLEAFLAEVVKIPDNTYFRLRAMSFDSVPWVVTMKKNDHYFPTMELIKDPKEECGWRRITYEGGKVIQGEGPDGVVGSAGEITDMDVDADVCG.

The interval 1-48 is disordered; sequence MNGTTSPIAARSKRKEPPHTVDGRHPKHHRTNGEVAPAADNTPDNQDE. Positions 15–24 are enriched in basic and acidic residues; the sequence is KEPPHTVDGR. The tract at residues 89 to 279 is serine protease; that stretch reads VVSIRFCQTC…LPLDRPLRAL (191 aa). Catalysis depends on charge relay system residues histidine 127, aspartate 158, and serine 240. PDZ domains lie at 312 to 384 and 880 to 960; these read PEWE…LRGG and AVSF…LRAM.

It belongs to the peptidase S1C family.

It is found in the nucleus. Functionally, nuclear serine protease which mediates apoptosis. This is Pro-apoptotic serine protease NMA111 (NMA111) from Chaetomium globosum (strain ATCC 6205 / CBS 148.51 / DSM 1962 / NBRC 6347 / NRRL 1970) (Soil fungus).